Consider the following 451-residue polypeptide: MKYFGTDGVRGVANQELTPELAFKVGRFGGYVLTQHADSQNAHPQVLVARDTRISGELLENALVAGLLSVGIEVLRLGVITTPAVAYLVRTQGAAAGVMITASHNPVEYNGIKYFGNDGYKLSDEMEEEIEALLDAPTDDLPRPTTDGLGTVEDYSEGSQKYIQFLEQTIADDLDGLHIAVDSANGSTSGLVSRLYADLNLDFDTIATTPNGLNINDQVGSTHPEQLQKFVVDQGAAIGLAFDGDGDRCIAVDEEGHLVDGDKIMYICGKYMAEHGRLKKDTIVTTVMSNLGMYKAMEAHDLQSVKTKVGDRYVVEEMRKSGYNLGGEQSGHIVFLDFNTTGDGLLTSLQLLHILKVTGKKLSELAADVKTYPQKLVNVKVSDKQAALTNPQVQAMIATVEKEMNGDGRVLVRPSGTEPLLRVMAEAPTEETVAAYVGRIADVVRAEVGVE.

Ser103 (phosphoserine intermediate) is an active-site residue. Ser103, Asp243, Asp245, and Asp247 together coordinate Mg(2+). A Phosphoserine modification is found at Ser103.

It belongs to the phosphohexose mutase family. The cofactor is Mg(2+). Activated by phosphorylation.

The enzyme catalyses alpha-D-glucosamine 1-phosphate = D-glucosamine 6-phosphate. Catalyzes the conversion of glucosamine-6-phosphate to glucosamine-1-phosphate. In Levilactobacillus brevis (strain ATCC 367 / BCRC 12310 / CIP 105137 / JCM 1170 / LMG 11437 / NCIMB 947 / NCTC 947) (Lactobacillus brevis), this protein is Phosphoglucosamine mutase.